Consider the following 320-residue polypeptide: Serpentine receptor class delta-40 (320 aa).

7 helical membrane-spanning segments follow: residues 12-32 (IFYP…IYLI), 42-62 (MLKV…VVSC), 95-115 (YQVL…TFVF), 133-153 (IILL…IMVI), 189-209 (LINF…SFFF), 243-263 (AFLP…CILT), and 273-293 (FMTV…LYFV).

Belongs to the nematode receptor-like protein srd family.

Its subcellular location is the membrane. This is Serpentine receptor class delta-40 (srd-40) from Caenorhabditis elegans.